Here is a 178-residue protein sequence, read N- to C-terminus: Large ribosomal subunit protein uL6 (178 aa).

The protein belongs to the universal ribosomal protein uL6 family. As to quaternary structure, part of the 50S ribosomal subunit.

This protein binds to the 23S rRNA, and is important in its secondary structure. It is located near the subunit interface in the base of the L7/L12 stalk, and near the tRNA binding site of the peptidyltransferase center. The chain is Large ribosomal subunit protein uL6 from Exiguobacterium sibiricum (strain DSM 17290 / CCUG 55495 / CIP 109462 / JCM 13490 / 255-15).